The following is a 266-amino-acid chain: Eukaryotic translation initiation factor 3 subunit J (266 aa).

Disordered regions lie at residues 1–111 (MAPS…EKDA) and 217–266 (NEKM…DDFM). Positions 26 to 44 (DEEEEDVLDSWDAAEDSEV) are enriched in acidic residues. Residues 40–82 (EDSEVEREKAAKAAEAKAKAEAEAAANKKSKAQRIQEKKAQRK) adopt a coiled-coil conformation. Composition is skewed to basic and acidic residues over residues 45–61 (EREK…KAEA) and 73–85 (RIQE…KADA). Over residues 86–97 (DAEDSDDSDEDE) the composition is skewed to acidic residues. 2 stretches are compositionally biased toward basic and acidic residues: residues 98–111 (AERR…EKDA) and 218–230 (EKMK…DKGN). Residues 254-266 (SYDDDGLDDDDFM) are compositionally biased toward acidic residues.

This sequence belongs to the eIF-3 subunit J family. As to quaternary structure, component of the eukaryotic translation initiation factor 3 (eIF-3) complex.

The protein resides in the cytoplasm. Component of the eukaryotic translation initiation factor 3 (eIF-3) complex, which is involved in protein synthesis of a specialized repertoire of mRNAs and, together with other initiation factors, stimulates binding of mRNA and methionyl-tRNAi to the 40S ribosome. The eIF-3 complex specifically targets and initiates translation of a subset of mRNAs involved in cell proliferation. This Aspergillus niger (strain ATCC MYA-4892 / CBS 513.88 / FGSC A1513) protein is Eukaryotic translation initiation factor 3 subunit J (hcr1).